A 141-amino-acid chain; its full sequence is Hemoglobin subunit alpha-1 (141 aa).

The Globin domain maps to 1 to 141 (VLSPEDKNNV…VSTVLTSKYR (141 aa)). Residue His-58 participates in O2 binding. His-87 lines the heme b pocket.

The protein belongs to the globin family. In terms of assembly, heterotetramer of two alpha chains and two beta chains. Red blood cells.

Its function is as follows. Involved in oxygen transport from the lung to the various peripheral tissues. The protein is Hemoglobin subunit alpha-1 of Tadarida brasiliensis (Brazilian free-tailed bat).